Reading from the N-terminus, the 333-residue chain is Anthranilate phosphoribosyltransferase (333 aa).

5-phospho-alpha-D-ribose 1-diphosphate contacts are provided by residues Gly-81, 84–85, Thr-89, 91–94, 109–117, and Ala-121; these read GD, NIST, and KHGNRSVSS. Gly-81 contacts anthranilate. Ser-93 serves as a coordination point for Mg(2+). Asn-112 is an anthranilate binding site. Arg-167 contributes to the anthranilate binding site. Residues Asp-225 and Glu-226 each contribute to the Mg(2+) site.

The protein belongs to the anthranilate phosphoribosyltransferase family. As to quaternary structure, homodimer. The cofactor is Mg(2+).

The catalysed reaction is N-(5-phospho-beta-D-ribosyl)anthranilate + diphosphate = 5-phospho-alpha-D-ribose 1-diphosphate + anthranilate. It functions in the pathway amino-acid biosynthesis; L-tryptophan biosynthesis; L-tryptophan from chorismate: step 2/5. Its function is as follows. Catalyzes the transfer of the phosphoribosyl group of 5-phosphorylribose-1-pyrophosphate (PRPP) to anthranilate to yield N-(5'-phosphoribosyl)-anthranilate (PRA). The polypeptide is Anthranilate phosphoribosyltransferase (Pasteurella multocida (strain Pm70)).